We begin with the raw amino-acid sequence, 171 residues long: S-ribosylhomocysteine lyase (171 aa).

Residues H54, H58, and C128 each coordinate Fe cation.

Belongs to the LuxS family. As to quaternary structure, homodimer. Requires Fe cation as cofactor.

The catalysed reaction is S-(5-deoxy-D-ribos-5-yl)-L-homocysteine = (S)-4,5-dihydroxypentane-2,3-dione + L-homocysteine. Functionally, involved in the synthesis of autoinducer 2 (AI-2) which is secreted by bacteria and is used to communicate both the cell density and the metabolic potential of the environment. The regulation of gene expression in response to changes in cell density is called quorum sensing. Catalyzes the transformation of S-ribosylhomocysteine (RHC) to homocysteine (HC) and 4,5-dihydroxy-2,3-pentadione (DPD). This Yersinia enterocolitica serotype O:8 / biotype 1B (strain NCTC 13174 / 8081) protein is S-ribosylhomocysteine lyase.